Consider the following 223-residue polypeptide: Urease accessory protein UreF (223 aa).

This sequence belongs to the UreF family. As to quaternary structure, ureD, UreF and UreG form a complex that acts as a GTP-hydrolysis-dependent molecular chaperone, activating the urease apoprotein by helping to assemble the nickel containing metallocenter of UreC. The UreE protein probably delivers the nickel.

The protein resides in the cytoplasm. Functionally, required for maturation of urease via the functional incorporation of the urease nickel metallocenter. This chain is Urease accessory protein UreF, found in Rhizobium leguminosarum bv. viciae.